A 352-amino-acid polypeptide reads, in one-letter code: UPF0324 membrane protein RA0957 (352 aa).

The next 10 helical transmembrane spans lie at 24-43, 48-67, 104-126, 136-158, 169-191, 201-223, 235-257, 272-294, 301-318, and 328-350; these read VVSY…SAQF, YGAP…NFLS, LGVS…AIIV, LSLL…LNAV, LALT…PVLA, SGVF…FAMS, IVRV…VLGA, GFVL…AAAG, SRWL…KTSV, and HVTL…LLWY.

This sequence belongs to the UPF0324 family.

The protein resides in the cell membrane. This is UPF0324 membrane protein RA0957 from Rhizobium meliloti (strain 1021) (Ensifer meliloti).